The chain runs to 296 residues: Bifunctional protein FolD (296 aa).

NADP(+) is bound by residues 168–170 (GRS), T197, and V238.

The protein belongs to the tetrahydrofolate dehydrogenase/cyclohydrolase family. Homodimer.

It carries out the reaction (6R)-5,10-methylene-5,6,7,8-tetrahydrofolate + NADP(+) = (6R)-5,10-methenyltetrahydrofolate + NADPH. The enzyme catalyses (6R)-5,10-methenyltetrahydrofolate + H2O = (6R)-10-formyltetrahydrofolate + H(+). It functions in the pathway one-carbon metabolism; tetrahydrofolate interconversion. Its function is as follows. Catalyzes the oxidation of 5,10-methylenetetrahydrofolate to 5,10-methenyltetrahydrofolate and then the hydrolysis of 5,10-methenyltetrahydrofolate to 10-formyltetrahydrofolate. The chain is Bifunctional protein FolD from Desulfotalea psychrophila (strain LSv54 / DSM 12343).